The primary structure comprises 155 residues: Myosin light chain alkali (155 aa).

EF-hand domains lie at 7 to 41 and 80 to 115; these read REVE…LNLN and GCYE…LGES.

As to quaternary structure, myosin is a hexamer of 2 heavy chains and 4 light chains. Indirect flight muscle isoform is found only in the indirect flight muscles. The larval and adult isoform is present in the larval and adult musculature.

This Drosophila melanogaster (Fruit fly) protein is Myosin light chain alkali (Mlc1).